A 279-amino-acid polypeptide reads, in one-letter code: Bifunctional protein FolD 1 (279 aa).

Residues 166–168 and S191 each bind NADP(+); that span reads GRS.

This sequence belongs to the tetrahydrofolate dehydrogenase/cyclohydrolase family. As to quaternary structure, homodimer.

The catalysed reaction is (6R)-5,10-methylene-5,6,7,8-tetrahydrofolate + NADP(+) = (6R)-5,10-methenyltetrahydrofolate + NADPH. The enzyme catalyses (6R)-5,10-methenyltetrahydrofolate + H2O = (6R)-10-formyltetrahydrofolate + H(+). The protein operates within one-carbon metabolism; tetrahydrofolate interconversion. In terms of biological role, catalyzes the oxidation of 5,10-methylenetetrahydrofolate to 5,10-methenyltetrahydrofolate and then the hydrolysis of 5,10-methenyltetrahydrofolate to 10-formyltetrahydrofolate. The polypeptide is Bifunctional protein FolD 1 (Salinispora arenicola (strain CNS-205)).